The following is a 288-amino-acid chain: MKILDGKATSAKVKAEVKERASALKNAGIEPALAVILVGSDKASQTYVAAKQKACEASGIRSVMHKLPQTTSQNELLALINVLNLDDSIDGILVQLPLPAHIDTTSVLETIWPQKDVDGFHAENVGKLVSGLDGFVPCTPLGIMRILKEYGIDVAGLNAVVIGRSNIVGKPMASLLLNASATVTITHSKTRNLKQICSAADLIVAAIGKPNFVTADMVKEGAIVIDVGINRLDDGRLVGDVDFEAVAPKSSFITPVPGGVGPMTIAMLLSNTIRSAQNRAKNLGIVKE.

NADP(+) contacts are provided by residues 163–165, Ser188, and Ile229; that span reads GRS.

Belongs to the tetrahydrofolate dehydrogenase/cyclohydrolase family. As to quaternary structure, homodimer.

It carries out the reaction (6R)-5,10-methylene-5,6,7,8-tetrahydrofolate + NADP(+) = (6R)-5,10-methenyltetrahydrofolate + NADPH. It catalyses the reaction (6R)-5,10-methenyltetrahydrofolate + H2O = (6R)-10-formyltetrahydrofolate + H(+). It functions in the pathway one-carbon metabolism; tetrahydrofolate interconversion. Functionally, catalyzes the oxidation of 5,10-methylenetetrahydrofolate to 5,10-methenyltetrahydrofolate and then the hydrolysis of 5,10-methenyltetrahydrofolate to 10-formyltetrahydrofolate. In Campylobacter curvus (strain 525.92), this protein is Bifunctional protein FolD.